We begin with the raw amino-acid sequence, 319 residues long: Ribonucleoside-diphosphate reductase small chain (319 aa).

Positions 70, 101, and 104 each coordinate Fe cation. The active site involves Tyr-108. Positions 163, 197, and 200 each coordinate Fe cation. Residues 313–319 (FSLDVDF) are interaction with R1.

It belongs to the ribonucleoside diphosphate reductase small chain family. In terms of assembly, interacts with RNR1/OPG080 subunit. Can interact with host RNR1 supunit. Requires Fe cation as cofactor.

The enzyme catalyses a 2'-deoxyribonucleoside 5'-diphosphate + [thioredoxin]-disulfide + H2O = a ribonucleoside 5'-diphosphate + [thioredoxin]-dithiol. In terms of biological role, ribonucleoside-diphosphate reductase holoenzyme provides the precursors necessary for viral DNA synthesis. Allows virus growth in non-dividing cells. Catalyzes the biosynthesis of deoxyribonucleotides from the corresponding ribonucleotides. This chain is Ribonucleoside-diphosphate reductase small chain (OPG048), found in Vaccinia virus (strain Copenhagen) (VACV).